The primary structure comprises 444 residues: Glutamyl-tRNA reductase (444 aa).

Substrate-binding positions include 49-52 (TCNR), Ser-109, 114-116 (ETQ), and Gln-120. Residue Cys-50 is the Nucleophile of the active site. 189–194 (GAGKMS) contacts NADP(+). The interval 425–444 (KPKKQPAPAGIKEPVLAKKG) is disordered.

This sequence belongs to the glutamyl-tRNA reductase family. As to quaternary structure, homodimer.

The enzyme catalyses (S)-4-amino-5-oxopentanoate + tRNA(Glu) + NADP(+) = L-glutamyl-tRNA(Glu) + NADPH + H(+). It participates in porphyrin-containing compound metabolism; protoporphyrin-IX biosynthesis; 5-aminolevulinate from L-glutamyl-tRNA(Glu): step 1/2. In terms of biological role, catalyzes the NADPH-dependent reduction of glutamyl-tRNA(Glu) to glutamate 1-semialdehyde (GSA). The protein is Glutamyl-tRNA reductase of Pelotomaculum thermopropionicum (strain DSM 13744 / JCM 10971 / SI).